The chain runs to 335 residues: DNA-directed RNA polymerase subunit alpha (335 aa).

An alpha N-terminal domain (alpha-NTD) region spans residues 1 to 248; sequence MTIQTSRTLS…GLFAPLQEVS (248 aa). Positions 256 to 335 are alpha C-terminal domain (alpha-CTD); that stretch reads KPDEDNQKNQ…LPRTREKGKA (80 aa).

It belongs to the RNA polymerase alpha chain family. As to quaternary structure, in cyanobacteria the RNAP catalytic core is composed of 2 alpha, 1 beta, 1 beta', 1 gamma and 1 omega subunit. When a sigma factor is associated with the core the holoenzyme is formed, which can initiate transcription.

It catalyses the reaction RNA(n) + a ribonucleoside 5'-triphosphate = RNA(n+1) + diphosphate. In terms of biological role, DNA-dependent RNA polymerase catalyzes the transcription of DNA into RNA using the four ribonucleoside triphosphates as substrates. This chain is DNA-directed RNA polymerase subunit alpha, found in Synechococcus sp. (strain JA-2-3B'a(2-13)) (Cyanobacteria bacterium Yellowstone B-Prime).